Consider the following 516-residue polypeptide: Thioredoxin reductase 2, mitochondrial (516 aa).

62–79 is a binding site for FAD; the sequence is DYVKPTPVGTKWGIGGTC. A disulfide bond links Cys-79 and Cys-84. Catalysis depends on His-489, which acts as the Proton acceptor.

It belongs to the class-I pyridine nucleotide-disulfide oxidoreductase family. Homodimer. It depends on FAD as a cofactor.

Its subcellular location is the mitochondrion. It catalyses the reaction [thioredoxin]-dithiol + NADP(+) = [thioredoxin]-disulfide + NADPH + H(+). Its function is as follows. Thioredoxin system is a major player in glutathione metabolism, due to the demonstrated absence of a glutathione reductase. Functionally interacts with the Sod/Cat reactive oxidation species (ROS) defense system and thereby has a role in preadult development and life span. Lack of a glutathione reductase suggests antioxidant defense in Drosophila, and probably in related insects, differs fundamentally from that in other organisms. The sequence is that of Thioredoxin reductase 2, mitochondrial from Drosophila melanogaster (Fruit fly).